Consider the following 143-residue polypeptide: Small ribosomal subunit protein bS6 (143 aa).

The disordered stretch occupies residues 95–143; sequence GPDTEQSFIMKSKDDKGDKPERRRRDDDENGDVGVSNDSDNDGGNAEAA. Positions 105–121 are enriched in basic and acidic residues; that stretch reads KSKDDKGDKPERRRRDD.

It belongs to the bacterial ribosomal protein bS6 family.

In terms of biological role, binds together with bS18 to 16S ribosomal RNA. The protein is Small ribosomal subunit protein bS6 of Xylella fastidiosa (strain M23).